The primary structure comprises 164 residues: Urease subunit beta (164 aa).

Composition is skewed to polar residues over residues 1 to 10 and 20 to 30; these read MSTKTNSTKA and TNRGTKSSAGY. The disordered stretch occupies residues 1-30; sequence MSTKTNSTKATSEKTDSLKTNRGTKSSAGY.

This sequence belongs to the urease beta subunit family. As to quaternary structure, heterotrimer of UreA (gamma), UreB (beta) and UreC (alpha) subunits. Three heterotrimers associate to form the active enzyme.

It is found in the cytoplasm. It catalyses the reaction urea + 2 H2O + H(+) = hydrogencarbonate + 2 NH4(+). It functions in the pathway nitrogen metabolism; urea degradation; CO(2) and NH(3) from urea (urease route): step 1/1. Its function is as follows. Expression of the urease operon increases the likelihood of bacterial survival by contributing to acid resistance in vitro and in vivo in BALB/c mice. Y.enterocolitica enters the body via an oral path and must survive the acidic stomach before being able to colonize the intestinal mucosa. This Yersinia enterocolitica protein is Urease subunit beta.